A 271-amino-acid polypeptide reads, in one-letter code: Bifunctional protein FolD (271 aa).

NADP(+)-binding positions include 154–156, Thr181, and Ile222; that span reads GRS.

The protein belongs to the tetrahydrofolate dehydrogenase/cyclohydrolase family. Homodimer.

The enzyme catalyses (6R)-5,10-methylene-5,6,7,8-tetrahydrofolate + NADP(+) = (6R)-5,10-methenyltetrahydrofolate + NADPH. It carries out the reaction (6R)-5,10-methenyltetrahydrofolate + H2O = (6R)-10-formyltetrahydrofolate + H(+). Its pathway is one-carbon metabolism; tetrahydrofolate interconversion. Its function is as follows. Catalyzes the oxidation of 5,10-methylenetetrahydrofolate to 5,10-methenyltetrahydrofolate and then the hydrolysis of 5,10-methenyltetrahydrofolate to 10-formyltetrahydrofolate. This chain is Bifunctional protein FolD, found in Thermosipho melanesiensis (strain DSM 12029 / CIP 104789 / BI429).